We begin with the raw amino-acid sequence, 198 residues long: 7-methyl-GTP pyrophosphatase (198 aa).

Asp-75 functions as the Proton acceptor in the catalytic mechanism.

The protein belongs to the Maf family. YceF subfamily. A divalent metal cation is required as a cofactor.

The protein localises to the cytoplasm. The enzyme catalyses N(7)-methyl-GTP + H2O = N(7)-methyl-GMP + diphosphate + H(+). Its function is as follows. Nucleoside triphosphate pyrophosphatase that hydrolyzes 7-methyl-GTP (m(7)GTP). May have a dual role in cell division arrest and in preventing the incorporation of modified nucleotides into cellular nucleic acids. The chain is 7-methyl-GTP pyrophosphatase from Bartonella quintana (strain Toulouse) (Rochalimaea quintana).